A 175-amino-acid polypeptide reads, in one-letter code: Dof zinc finger protein DOF1.5 (175 aa).

The interval 29 to 57 is disordered; it reads EEQQQQQQPELQATTAVRSPSSDLTAEKR. Over residues 37-52 the composition is skewed to polar residues; the sequence is PELQATTAVRSPSSDL. The segment at 62–116 adopts a Dof-type zinc-finger fold; that stretch reads IPCPRCKSMETKFCYFNNYNVNQPRHFCKGCQRYWTAGGALRNVPVGAGRRKSKP. Residues Cys64, Cys67, Cys89, and Cys92 each contribute to the Zn(2+) site. Residues 162-168 carry the Nuclear localization signal motif; it reads PVKRLRC.

It localises to the nucleus. Transcription factor that binds specifically to a 5'-AA[AG]G-3' consensus core sequence. Acts as a negative regulator in the phytochrome-mediated light responses. Controls phyB-mediated end-of-day response and the phyA-mediated anthocyanin accumulation. Not involved in direct flowering time regulation. This is Dof zinc finger protein DOF1.5 (DOF1.5) from Arabidopsis thaliana (Mouse-ear cress).